The chain runs to 110 residues: Nitrogenase-stabilizing/protective protein NifW (110 aa).

Belongs to the NifW family. In terms of assembly, homotrimer; associates with NifD.

Its function is as follows. May protect the nitrogenase Fe-Mo protein from oxidative damage. The sequence is that of Nitrogenase-stabilizing/protective protein NifW from Acidithiobacillus ferrooxidans (strain ATCC 23270 / DSM 14882 / CIP 104768 / NCIMB 8455) (Ferrobacillus ferrooxidans (strain ATCC 23270)).